Reading from the N-terminus, the 373-residue chain is 4-hydroxy-3-methylbut-2-en-1-yl diphosphate synthase (flavodoxin) (373 aa).

[4Fe-4S] cluster contacts are provided by Cys-270, Cys-273, Cys-305, and Glu-312.

The protein belongs to the IspG family. It depends on [4Fe-4S] cluster as a cofactor.

The enzyme catalyses (2E)-4-hydroxy-3-methylbut-2-enyl diphosphate + oxidized [flavodoxin] + H2O + 2 H(+) = 2-C-methyl-D-erythritol 2,4-cyclic diphosphate + reduced [flavodoxin]. It participates in isoprenoid biosynthesis; isopentenyl diphosphate biosynthesis via DXP pathway; isopentenyl diphosphate from 1-deoxy-D-xylulose 5-phosphate: step 5/6. In terms of biological role, converts 2C-methyl-D-erythritol 2,4-cyclodiphosphate (ME-2,4cPP) into 1-hydroxy-2-methyl-2-(E)-butenyl 4-diphosphate. This chain is 4-hydroxy-3-methylbut-2-en-1-yl diphosphate synthase (flavodoxin), found in Serratia proteamaculans (strain 568).